We begin with the raw amino-acid sequence, 354 residues long: Vanillate O-demethylase oxygenase subunit (354 aa).

In terms of domain architecture, Rieske spans 7–107 (WYVACTPDEI…VEERYGFIWV (101 aa)). 4 residues coordinate [2Fe-2S] cluster: C47, H49, C66, and H69.

This sequence belongs to the bacterial ring-hydroxylating dioxygenase alpha subunit family. As to quaternary structure, this demethylase system consists of two proteins: an oxygenase and an oxygenase reductase. The cofactor is [2Fe-2S] cluster. Requires Fe cation as cofactor.

It carries out the reaction vanillate + NADH + O2 + H(+) = 3,4-dihydroxybenzoate + formaldehyde + NAD(+) + H2O. Its pathway is xenobiotic degradation; vanillyl-alcohol degradation. In Pseudomonas sp. (strain HR199 / DSM 7063), this protein is Vanillate O-demethylase oxygenase subunit (vanA).